A 417-amino-acid chain; its full sequence is Exodeoxyribonuclease 7 large subunit (417 aa).

The protein belongs to the XseA family. In terms of assembly, heterooligomer composed of large and small subunits.

It is found in the cytoplasm. The catalysed reaction is Exonucleolytic cleavage in either 5'- to 3'- or 3'- to 5'-direction to yield nucleoside 5'-phosphates.. Functionally, bidirectionally degrades single-stranded DNA into large acid-insoluble oligonucleotides, which are then degraded further into small acid-soluble oligonucleotides. The sequence is that of Exodeoxyribonuclease 7 large subunit from Helicobacter hepaticus (strain ATCC 51449 / 3B1).